A 361-amino-acid polypeptide reads, in one-letter code: S-adenosylmethionine decarboxylase proenzyme (361 aa).

Active-site residues include E8 and E11. S68 (schiff-base intermediate with substrate; via pyruvic acid) is an active-site residue. S68 is modified (pyruvic acid (Ser); by autocatalysis). C82 acts as the Proton donor; for catalytic activity in catalysis. Active-site proton acceptor; for processing activity residues include S234 and H247. Positions 341–361 are disordered; it reads SCGSPRSTLHRCWSETENEEE.

The protein belongs to the eukaryotic AdoMetDC family. Pyruvate serves as cofactor. In terms of processing, is synthesized initially as an inactive proenzyme. Formation of the active enzyme involves a self-maturation process in which the active site pyruvoyl group is generated from an internal serine residue via an autocatalytic post-translational modification. Two non-identical subunits are generated from the proenzyme in this reaction, and the pyruvate is formed at the N-terminus of the alpha chain, which is derived from the carboxyl end of the proenzyme. The post-translation cleavage follows an unusual pathway, termed non-hydrolytic serinolysis, in which the side chain hydroxyl group of the serine supplies its oxygen atom to form the C-terminus of the beta chain, while the remainder of the serine residue undergoes an oxidative deamination to produce ammonia and the pyruvoyl group blocking the N-terminus of the alpha chain.

It carries out the reaction S-adenosyl-L-methionine + H(+) = S-adenosyl 3-(methylsulfanyl)propylamine + CO2. The protein operates within amine and polyamine biosynthesis; S-adenosylmethioninamine biosynthesis; S-adenosylmethioninamine from S-adenosyl-L-methionine: step 1/1. The sequence is that of S-adenosylmethionine decarboxylase proenzyme (SAMDC) from Helianthus annuus (Common sunflower).